The primary structure comprises 320 residues: Probable L-ascorbate peroxidase 5, chloroplastic (320 aa).

A chloroplast-targeting transit peptide spans Met-1 to Ser-42. Catalysis depends on His-80, which acts as the Proton acceptor. Position 209 (His-209) interacts with heme b. Thr-210 provides a ligand contact to K(+). Residues Arg-213–Trp-241 form a disordered region. Over residues Ala-214–Tyr-228 the composition is skewed to basic and acidic residues. Residues Thr-242 and Asp-249 each coordinate K(+).

This sequence belongs to the peroxidase family. Ascorbate peroxidase subfamily. The cofactor is heme b. In terms of tissue distribution, expressed in leaves, stems and flowers.

The protein localises to the plastid. It is found in the chloroplast stroma. The catalysed reaction is L-ascorbate + H2O2 = L-dehydroascorbate + 2 H2O. Its function is as follows. Plays a key role in hydrogen peroxide removal. This Oryza sativa subsp. japonica (Rice) protein is Probable L-ascorbate peroxidase 5, chloroplastic.